Consider the following 445-residue polypeptide: Glucose-6-phosphate isomerase (445 aa).

The active-site Proton donor is E284. Residues H305 and K419 contribute to the active site.

This sequence belongs to the GPI family.

The protein resides in the cytoplasm. It catalyses the reaction alpha-D-glucose 6-phosphate = beta-D-fructose 6-phosphate. The protein operates within carbohydrate biosynthesis; gluconeogenesis. Its pathway is carbohydrate degradation; glycolysis; D-glyceraldehyde 3-phosphate and glycerone phosphate from D-glucose: step 2/4. Functionally, catalyzes the reversible isomerization of glucose-6-phosphate to fructose-6-phosphate. This chain is Glucose-6-phosphate isomerase, found in Leptospira borgpetersenii serovar Hardjo-bovis (strain JB197).